The sequence spans 151 residues: Myosin light polypeptide 6 (151 aa).

An N-acetylcysteine modification is found at Cys2. The EF-hand 1 domain occupies 7–42 (DQTAEFKEAFQLFDRTGDGKILYSQCGDVMRALGQN). Ser57 carries the phosphoserine modification. Lys81 is modified (N6-acetyllysine). The region spanning 84–119 (GTYEDYVEGLRVFDKEGNGTVMGAEIRHVLVTLGEK) is the EF-hand 2 domain.

In terms of assembly, myosin is a hexamer of 2 heavy chains and 4 light chains. Interacts with SPATA6.

In terms of biological role, regulatory light chain of myosin. Does not bind calcium. The chain is Myosin light polypeptide 6 (MYL6) from Bos taurus (Bovine).